A 341-amino-acid polypeptide reads, in one-letter code: Probable UDP-glucuronate 4-epimerase (341 aa).

The Proton acceptor role is filled by Y152.

Belongs to the NAD(P)-dependent epimerase/dehydratase family. It depends on NAD(+) as a cofactor.

It carries out the reaction UDP-alpha-D-glucuronate = UDP-alpha-D-galacturonate. The chain is Probable UDP-glucuronate 4-epimerase from Rhizobium meliloti (strain 1021) (Ensifer meliloti).